The sequence spans 445 residues: Ribosomal protein uS12 methylthiotransferase RimO (445 aa).

Positions 11–121 (PKISFVSLGC…VLDAVHRASP (111 aa)) constitute an MTTase N-terminal domain. [4Fe-4S] cluster-binding residues include Cys-20, Cys-56, Cys-85, Cys-152, Cys-156, and Cys-159. Residues 138-375 (LTPRHYAYLK…MARQQKISAR (238 aa)) enclose the Radical SAM core domain. Residues 378-444 (KRKVGTRQQI…EYDLHGTVAG (67 aa)) form the TRAM domain.

It belongs to the methylthiotransferase family. RimO subfamily. [4Fe-4S] cluster serves as cofactor.

It localises to the cytoplasm. It carries out the reaction L-aspartate(89)-[ribosomal protein uS12]-hydrogen + (sulfur carrier)-SH + AH2 + 2 S-adenosyl-L-methionine = 3-methylsulfanyl-L-aspartate(89)-[ribosomal protein uS12]-hydrogen + (sulfur carrier)-H + 5'-deoxyadenosine + L-methionine + A + S-adenosyl-L-homocysteine + 2 H(+). Functionally, catalyzes the methylthiolation of an aspartic acid residue of ribosomal protein uS12. The chain is Ribosomal protein uS12 methylthiotransferase RimO from Bradyrhizobium sp. (strain ORS 278).